The primary structure comprises 315 residues: Calcium homeostasis modulator protein 6 (315 aa).

Over 1 to 21 (MEKFRAVLDLHVKHHSALGYG) the chain is Cytoplasmic. A helical transmembrane segment spans residues 22 to 37 (LVTLLTAGGERIFSAV). The Extracellular segment spans residues 38–46 (AFQCPCSAA). 3 cysteine pairs are disulfide-bonded: Cys41–Cys126, Cys43–Cys155, and Cys139–Cys146. The helical transmembrane segment at 47 to 68 (WNLPYGLVFLLVPALALFLLGY) threads the bilayer. Residues 69 to 102 (VLSARTWRLLTGCCSSARASCGSALRGSLVCTQI) are Cytoplasmic-facing. The chain crosses the membrane as a helical span at residues 103-127 (SAAAALAPLTWVAVALLGGAFYECA). Residues 128-169 (ATGSAAFAQRLCLGRNRSCAAELPLVPCNQAKASDVQDLLKD) are Extracellular-facing. A helical transmembrane segment spans residues 170–192 (LKAQSQVLGWILIAVVIIILLIF). The Cytoplasmic portion of the chain corresponds to 193-315 (TSVTRCLSPV…SSGINSTPEL (123 aa)).

The protein belongs to the CALHM family. Oligomerizes to form decameric and undecameric channels. Post-translationally, N-glycosylated. As to expression, placenta.

The protein resides in the cell membrane. The catalysed reaction is ATP(in) = ATP(out). In terms of biological role, pore-forming subunit of an ATP-permeable channel. In response to pathogen-derived and proinflammatory stimuli, relocates from intracellular compartments to NK-dendritic cell and NK-macrophage immune synapses where it mediates ATP efflux and NK cell activation involved in antimicrobial and antitumor responses. May assemble to form gap junction channel-like structures with gating and ion conductance likely regulated by membrane lipids and voltage rather than by extracellular calcium levels. The chain is Calcium homeostasis modulator protein 6 from Homo sapiens (Human).